The chain runs to 238 residues: Modulator of macroautophagy TMEM150B (238 aa).

Over 1–8 (MWNYLSLL) the chain is Cytoplasmic. Residues 9-29 (PVILFLWAIAGIWIVFAIAVV) traverse the membrane as a helical segment. N-linked (GlcNAc...) asparagine glycosylation is present at Asn30. The Extracellular segment spans residues 30–51 (NGSVDLNEGFPFISICGSYAPQ). A helical transmembrane segment spans residues 52 to 72 (SCIFGQVLNIGAALTVWICIV). The Cytoplasmic portion of the chain corresponds to 73–86 (RHHQLRDWGVKTWQ). Residues 87–107 (NQLILWSGILCALGTSIVGNF) traverse the membrane as a helical segment. Residues 108-116 (QDKNQKPTH) lie on the Extracellular side of the membrane. Residues 117–137 (LAGAFLAFILGNLYFWLQFFL) form a helical membrane-spanning segment. Residues 138–156 (SWWVKGLPQPGPHWIKSLR) lie on the Cytoplasmic side of the membrane. A helical transmembrane segment spans residues 157-177 (LSLCSLSTILIVAMIVLHALH). Topologically, residues 178-186 (MRSASAICE) are extracellular. A helical transmembrane segment spans residues 187–207 (WVVAMLLFMLFGFFAVDFSIL). At 208–238 (RGCTLHLHPRLDSSLPQAPSGSPNIQMAQVL) the chain is on the cytoplasmic side.

The protein belongs to the DRAM/TMEM150 family.

The protein localises to the cell membrane. It is found in the endosome membrane. The protein resides in the cytoplasmic vesicle. It localises to the autophagosome membrane. In terms of biological role, modulator of macroautophagy that causes accumulation of autophagosomes under basal conditions and enhances autophagic flux. Represses cell death and promotes long-term clonogenic survival of cells grown in the absence of glucose in a macroautophagy-independent manner. May have some role in extracellular matrix engulfment or growth factor receptor recycling, both of which can modulate cell survival. The polypeptide is Modulator of macroautophagy TMEM150B (Mus musculus (Mouse)).